Reading from the N-terminus, the 89-residue chain is Large ribosomal subunit protein eL34 (89 aa).

Residues 41–69 (RPLNGVPRGRPSELRKLPKTAKRPERPYP) form a disordered region. Over residues 50–66 (RPSELRKLPKTAKRPER) the composition is skewed to basic and acidic residues.

The protein belongs to the eukaryotic ribosomal protein eL34 family.

This Thermococcus gammatolerans (strain DSM 15229 / JCM 11827 / EJ3) protein is Large ribosomal subunit protein eL34.